The primary structure comprises 512 residues: ATP synthase subunit alpha (512 aa).

170-177 (GDRQTGKT) is a binding site for ATP.

Belongs to the ATPase alpha/beta chains family. F-type ATPases have 2 components, CF(1) - the catalytic core - and CF(0) - the membrane proton channel. CF(1) has five subunits: alpha(3), beta(3), gamma(1), delta(1), epsilon(1). CF(0) has three main subunits: a(1), b(2) and c(9-12). The alpha and beta chains form an alternating ring which encloses part of the gamma chain. CF(1) is attached to CF(0) by a central stalk formed by the gamma and epsilon chains, while a peripheral stalk is formed by the delta and b chains.

The protein localises to the cell inner membrane. The catalysed reaction is ATP + H2O + 4 H(+)(in) = ADP + phosphate + 5 H(+)(out). Produces ATP from ADP in the presence of a proton gradient across the membrane. The alpha chain is a regulatory subunit. The sequence is that of ATP synthase subunit alpha from Solibacter usitatus (strain Ellin6076).